A 448-amino-acid chain; its full sequence is Cysteine--tRNA ligase (448 aa).

Residue cysteine 27 coordinates Zn(2+). The short motif at proline 29 to asparagine 39 is the 'HIGH' region element. Positions 210, 235, and 239 each coordinate Zn(2+). The short motif at lysine 267–serine 271 is the 'KMSKS' region element. Residue lysine 270 coordinates ATP.

Belongs to the class-I aminoacyl-tRNA synthetase family. As to quaternary structure, monomer. It depends on Zn(2+) as a cofactor.

The protein resides in the cytoplasm. The enzyme catalyses tRNA(Cys) + L-cysteine + ATP = L-cysteinyl-tRNA(Cys) + AMP + diphosphate. This Lactococcus lactis subsp. lactis (strain IL1403) (Streptococcus lactis) protein is Cysteine--tRNA ligase.